The primary structure comprises 274 residues: Tryptophan synthase alpha chain (274 aa).

Active-site proton acceptor residues include Glu49 and Asp60.

It belongs to the TrpA family. Tetramer of two alpha and two beta chains.

It catalyses the reaction (1S,2R)-1-C-(indol-3-yl)glycerol 3-phosphate + L-serine = D-glyceraldehyde 3-phosphate + L-tryptophan + H2O. It functions in the pathway amino-acid biosynthesis; L-tryptophan biosynthesis; L-tryptophan from chorismate: step 5/5. In terms of biological role, the alpha subunit is responsible for the aldol cleavage of indoleglycerol phosphate to indole and glyceraldehyde 3-phosphate. This Gluconacetobacter diazotrophicus (strain ATCC 49037 / DSM 5601 / CCUG 37298 / CIP 103539 / LMG 7603 / PAl5) protein is Tryptophan synthase alpha chain.